Reading from the N-terminus, the 94-residue chain is Co-chaperonin GroES (94 aa).

This sequence belongs to the GroES chaperonin family. In terms of assembly, heptamer of 7 subunits arranged in a ring. Interacts with the chaperonin GroEL.

It localises to the cytoplasm. Functionally, together with the chaperonin GroEL, plays an essential role in assisting protein folding. The GroEL-GroES system forms a nano-cage that allows encapsulation of the non-native substrate proteins and provides a physical environment optimized to promote and accelerate protein folding. GroES binds to the apical surface of the GroEL ring, thereby capping the opening of the GroEL channel. The chain is Co-chaperonin GroES from Streptococcus pneumoniae (strain ATCC BAA-255 / R6).